A 1046-amino-acid polypeptide reads, in one-letter code: Piwi-like protein 2 (1046 aa).

A compositionally biased stretch (pro residues) spans 1–12; it reads MDPKRPTFPSPP. The interval 1-35 is disordered; sequence MDPKRPTFPSPPGVIRAPWQQSTEDQSQLLDQPSL. Residues 19–31 are compositionally biased toward polar residues; the sequence is WQQSTEDQSQLLD. The 114-residue stretch at 462–575 folds into the PAZ domain; sequence SVLDVMNLIY…LLPELSFMTG (114 aa). Positions 741–1032 constitute a Piwi domain; sequence LVVCIMTGNR…LAFLSGQYLH (292 aa). Residues Asp-818, Glu-856, Asp-888, and His-1021 contribute to the active site.

This sequence belongs to the argonaute family. Piwi subfamily. As to quaternary structure, component of the PET complex. Mg(2+) is required as a cofactor. In terms of processing, methylated on arginine residues; required for the interaction with Tudor domain-containing protein and subsequent localization to the meiotic nuage, also named P granule. In terms of tissue distribution, detected in primordial germ cells (PGCs) from 3 dpf. In adult, it is found in both the female and male gonad. In the ovary, it is present in all stages of germ cell differentiation. In testis, it is present in mitotic and meiotic germ cells. No protein has been detected in the fully differentiated sperm cell.

It localises to the cytoplasm. Its subcellular location is the nucleus. In terms of biological role, endoribonuclease that plays a central role during spermatogenesis by repressing transposable elements and preventing their mobilization, which is essential for the germline integrity. Plays an essential role in germ cell differentiation and meiosis, independently of the function in transposable elements repression. Acts via the piRNA metabolic process, which mediates the repression of transposable elements during meiosis by forming complexes composed of piRNAs and Piwi proteins and govern the methylation and subsequent repression of transposons. During piRNA biosynthesis, plays a key role in the piRNA amplification loop, also named ping-pong amplification cycle, by acting as a 'slicer-competent' piRNA endoribonuclease that cleaves primary piRNAs, which are then loaded onto 'slicer-incompetent' piwil4. Piwil2 slicing produces a pre-miRNA intermediate, which is then processed in mature piRNAs, and as well as a 16 nucleotide by-product that is degraded. Required for piwil4/miwi2 nuclear localization and association with secondary piRNAs antisense. Represses circadian rhythms by promoting the stability and activity of core clock components BMAL1 and CLOCK. The polypeptide is Piwi-like protein 2 (piwil2) (Danio rerio (Zebrafish)).